The sequence spans 402 residues: Ferrochelatase, mitochondrial (402 aa).

Residues 1 to 33 (MAAAGRAARPLVAGGRQLRVPLRWRGQVAAAAP) constitute a mitochondrion transit peptide. Positions 94, 102, and 109 each coordinate protoporphyrin IX. Position 175 (C175) interacts with [2Fe-2S] cluster. Residues H209 and D362 contribute to the active site. 3 residues coordinate [2Fe-2S] cluster: C382, C385, and C390.

It belongs to the ferrochelatase family. As to quaternary structure, homodimer. Homotetramer. It depends on [2Fe-2S] cluster as a cofactor.

Its subcellular location is the mitochondrion inner membrane. It carries out the reaction heme b + 2 H(+) = protoporphyrin IX + Fe(2+). It functions in the pathway porphyrin-containing compound metabolism; protoheme biosynthesis; protoheme from protoporphyrin-IX: step 1/1. Functionally, catalyzes the ferrous insertion into protoporphyrin IX. This is Ferrochelatase, mitochondrial from Gallus gallus (Chicken).